A 247-amino-acid polypeptide reads, in one-letter code: GTP cyclohydrolase 1 type 2 homolog (247 aa).

His63, His64, Asp101, His215, and Glu219 together coordinate a divalent metal cation.

This sequence belongs to the GTP cyclohydrolase I type 2/NIF3 family. As to quaternary structure, toroid-shaped homohexamer. In the hexamer, 3 dimers assemble to form a ring-like structure surrounding a central hole.

Provides significant protection from radiation damage and may be involved in the degradation of radiation-damaged nucleotides. This is GTP cyclohydrolase 1 type 2 homolog (ybgI) from Salmonella typhi.